Consider the following 251-residue polypeptide: MAIISLAEMMESGVHFGHQTRRWNPRMAPYIYTARNGVHIIDLVKTAQCVETAYRWVRTNAEQGKRFLFVGTKRQAAGIIAEEATRCGSYYINQRWLGGMLTNWATIKGRVDRLKELERMEETGALALRPKKEAAVLRRELERLQKYLGGIKNMRRLPDAVVIIDQKREYNAVQECQKLGIPIVAMLDTNCDPDVVDVPIPGNDDAIRSVKLIVSKLADAIYEARHGAAPVAEEYDYDGAEDEYEDDADEA.

This sequence belongs to the universal ribosomal protein uS2 family.

The sequence is that of Small ribosomal subunit protein uS2 from Synechococcus elongatus (strain ATCC 33912 / PCC 7942 / FACHB-805) (Anacystis nidulans R2).